The sequence spans 157 residues: MTNTETAVFGMGCFWSAEELFRKINGVISTEVGFMGGNIKNPTYGQVCRGRSGHIEVVNIIYNPKILKYDDLLELFWNNHDPTTPNRQGWDVGEQYSSHIFYFTEEQKLLAEKSFEKIQKNSELKIVTAIRKASDFFPAEEYHQKYFMKKNNCILNF.

Cysteine 13 is an active-site residue.

It belongs to the MsrA Met sulfoxide reductase family.

The enzyme catalyses L-methionyl-[protein] + [thioredoxin]-disulfide + H2O = L-methionyl-(S)-S-oxide-[protein] + [thioredoxin]-dithiol. It catalyses the reaction [thioredoxin]-disulfide + L-methionine + H2O = L-methionine (S)-S-oxide + [thioredoxin]-dithiol. Functionally, has an important function as a repair enzyme for proteins that have been inactivated by oxidation. Catalyzes the reversible oxidation-reduction of methionine sulfoxide in proteins to methionine. The polypeptide is Peptide methionine sulfoxide reductase MsrA (Methanococcus maripaludis (strain C6 / ATCC BAA-1332)).